The following is a 232-amino-acid chain: F420-dependent NADP reductase (232 aa).

NADP(+) contacts are provided by residues 15 to 18 (TGDQ), 37 to 38 (SR), Lys-42, Val-80, Val-106, and Ala-151.

Belongs to the F420-dependent NADP reductase family. As to quaternary structure, homotetramer.

It carries out the reaction reduced coenzyme F420-(gamma-L-Glu)(n) + NADP(+) = oxidized coenzyme F420-(gamma-L-Glu)(n) + NADPH + 2 H(+). Its function is as follows. Catalyzes the reduction of NADP(+) with F420H(2) via hydride transfer, and likely the reverse reaction, i.e. the reduction of F420 with NADPH. Probably functions in the regeneration of NADPH required in biosynthetic reactions. Is specific for reduced F420 as electron donor for the reduction of NADP; neither reduced FAD nor FMN can act as electron donor. The enzyme is also specific for NADP; NAD is not utilized as substrate. The sequence is that of F420-dependent NADP reductase (fno) from Methanothermobacter thermautotrophicus (strain ATCC 29096 / DSM 1053 / JCM 10044 / NBRC 100330 / Delta H) (Methanobacterium thermoautotrophicum).